Here is a 115-residue protein sequence, read N- to C-terminus: U3-lycotoxin-Ls1s (115 aa).

The signal sequence occupies residues M1–S20. Positions E21–R44 are excised as a propeptide. 4 cysteine pairs are disulfide-bonded: C48/C63, C55/C72, C62/C87, and C74/C85.

This sequence belongs to the neurotoxin 19 (CSTX) family. 01 subfamily. In terms of tissue distribution, expressed by the venom gland.

The protein resides in the secreted. The chain is U3-lycotoxin-Ls1s from Lycosa singoriensis (Wolf spider).